We begin with the raw amino-acid sequence, 305 residues long: tRNA uridine(34) hydroxylase (305 aa).

The Rhodanese domain occupies 125–219 (ADENTVVVDT…YLEEVPREQS (95 aa)). The active-site Cysteine persulfide intermediate is C179.

This sequence belongs to the TrhO family.

It catalyses the reaction uridine(34) in tRNA + AH2 + O2 = 5-hydroxyuridine(34) in tRNA + A + H2O. Its function is as follows. Catalyzes oxygen-dependent 5-hydroxyuridine (ho5U) modification at position 34 in tRNAs. In Brucella canis (strain ATCC 23365 / NCTC 10854 / RM-666), this protein is tRNA uridine(34) hydroxylase.